The sequence spans 412 residues: UPF0754 membrane protein Synpcc7942_1098 (412 aa).

The next 2 helical transmembrane spans lie at L8–I28 and I390–L410.

Belongs to the UPF0754 family.

The protein localises to the cell inner membrane. The sequence is that of UPF0754 membrane protein Synpcc7942_1098 from Synechococcus elongatus (strain ATCC 33912 / PCC 7942 / FACHB-805) (Anacystis nidulans R2).